The chain runs to 371 residues: MSIHSASPIIRRKSRKIWVGNVPVGGDAPIAVQSMTNTETCDVAATVAQIRRLEDAGADIVRVSVPDMDAAEAFGKIKQQVNVPLVADIHFDYRIALRVAELGVDCLRINPGNIGREDRVKAVVDAARERNIPIRIGVNAGSLEKDLQKKYGEPTPEALLESAMRHVDHLDKLDFQNFKVSVKASDVFMAVAAYRLLARQIEQPLHLGITEAGGLRSGTVKSAVGLGMLLAEGIGDTIRISLAADPVEEIKVGFDILKSLHLRSRGINFIACPSCSRQNFDVVKTMNELEGRLEDLLVPMDVAVIGCVVNGPGEAKEAHVGLTGGTPNLVYIDGKPSQKLTNDNLVDELERLIRQKAAEKAEADASLIARG.

[4Fe-4S] cluster is bound by residues Cys272, Cys275, Cys307, and Glu314.

The protein belongs to the IspG family. The cofactor is [4Fe-4S] cluster.

It catalyses the reaction (2E)-4-hydroxy-3-methylbut-2-enyl diphosphate + oxidized [flavodoxin] + H2O + 2 H(+) = 2-C-methyl-D-erythritol 2,4-cyclic diphosphate + reduced [flavodoxin]. It participates in isoprenoid biosynthesis; isopentenyl diphosphate biosynthesis via DXP pathway; isopentenyl diphosphate from 1-deoxy-D-xylulose 5-phosphate: step 5/6. Functionally, converts 2C-methyl-D-erythritol 2,4-cyclodiphosphate (ME-2,4cPP) into 1-hydroxy-2-methyl-2-(E)-butenyl 4-diphosphate. The chain is 4-hydroxy-3-methylbut-2-en-1-yl diphosphate synthase (flavodoxin) from Pseudomonas aeruginosa (strain LESB58).